Here is a 267-residue protein sequence, read N- to C-terminus: Phosphate import ATP-binding protein PstB 2 (267 aa).

An ABC transporter domain is found at 21–262; sequence LATKDLHVYY…AQCQSTNDYV (242 aa). 53 to 60 provides a ligand contact to ATP; it reads GPSGCGKS.

It belongs to the ABC transporter superfamily. Phosphate importer (TC 3.A.1.7) family. The complex is composed of two ATP-binding proteins (PstB), two transmembrane proteins (PstC and PstA) and a solute-binding protein (PstS).

It localises to the cell membrane. The enzyme catalyses phosphate(out) + ATP + H2O = ADP + 2 phosphate(in) + H(+). In terms of biological role, part of the ABC transporter complex PstSACB involved in phosphate import. Responsible for energy coupling to the transport system. This chain is Phosphate import ATP-binding protein PstB 2, found in Streptococcus pyogenes serotype M18 (strain MGAS8232).